The chain runs to 645 residues: Transcription factor AN6788 (645 aa).

Residues 1–21 (MPQKAQPQPRESPFKPARQQP) are disordered. Residues 25–52 (CEECRKRKARCDRAKPQCGSCMMTGRVC) constitute a DNA-binding region (zn(2)-C6 fungal-type). The segment covering 113-131 (PDFEPNSHPRHSQSHDRRQ) has biased composition (basic and acidic residues). The tract at residues 113–170 (PDFEPNSHPRHSQSHDRRQQSGPDSSPDTQHELPFLQSPPAARDADSAERALLPSPVS) is disordered.

The protein localises to the nucleus. Transcription factors AN6788 and AN6790 act in tandem to regulate the expression of the non-reducing polyketide synthase pkfA from the aspernidine A biosynthesis cluster. They do not control the expression of the other genes involved in aspernidine A biosynthesis, nor do they regulate the expression of the highly reducing polyketide synthase AN6791 and the esterase AN6793 with which they are predicted to form a secondary metabolite biosynthesis cluster. In Emericella nidulans (strain FGSC A4 / ATCC 38163 / CBS 112.46 / NRRL 194 / M139) (Aspergillus nidulans), this protein is Transcription factor AN6788.